A 103-amino-acid chain; its full sequence is BLOC-1-related complex subunit 7 (103 aa).

This sequence belongs to the BORCS7 family.

Its subcellular location is the lysosome membrane. In terms of biological role, as part of a BORC-like complex may play a role in lysosomes movement and localization at the cell periphery. Associated with the cytosolic face of lysosomes, this complex may couple lysosomes to microtubule plus-end-directed kinesin motor. In Danio rerio (Zebrafish), this protein is BLOC-1-related complex subunit 7.